The primary structure comprises 73 residues: Nodulin-1 (73 aa).

A signal peptide spans 1–23 (MERKTLASLCFFLIVLLAAQVVA). Cystine bridges form between Cys-39/Cys-64, Cys-49/Cys-71, and Cys-53/Cys-73.

As to expression, expressed in nodules, but not in leaves, stems, flowers and roots. In developing nodules, expressed close to the infection threads.

The protein resides in the secreted. Nodulation-related protein probably involved in the infection process. The protein is Nodulin-1 (N1) of Medicago truncatula (Barrel medic).